The sequence spans 284 residues: MAAVVFSLRRSGPVFRLPGVLQVCRGAQTAAAAAPASQAEARIKKFAIYRWDPDKPGDKPRMQTYEVDLNECGSMVLDALIKIKNEMDPTLTFRRSCREGICGSCAMNINGGNTLACTVRIDTNLSKVSKIYPLPHMYVVKDLVPDLSNFYAQYKSIEPYLKKKDESQEGKEQYLQSIEDRDKLDGLYECILCACCSTSCPSYWWNADKYLGPAVLMQAYRWMIDSRDDYTEERLAKLQDPFSLYRCHTIMNCTRTCPKGLNPGKAIAEIKKMMATYKERAASV.

The N-terminal 26 residues, 1 to 26 (MAAVVFSLRRSGPVFRLPGVLQVCRG), are a transit peptide targeting the mitochondrion. Residues 44 to 137 (KKFAIYRWDP…VSKIYPLPHM (94 aa)) form the 2Fe-2S ferredoxin-type domain. Positions 97, 102, 105, and 117 each coordinate [2Fe-2S] cluster. The region spanning 180–210 (DRDKLDGLYECILCACCSTSCPSYWWNADKY) is the 4Fe-4S ferredoxin-type domain. Positions 190, 193, and 196 each coordinate [4Fe-4S] cluster. Cysteine 200 contacts [3Fe-4S] cluster. Tryptophan 205 serves as a coordination point for a ubiquinone. [3Fe-4S] cluster contacts are provided by cysteine 247 and cysteine 253. Cysteine 257 contacts [4Fe-4S] cluster.

The protein belongs to the succinate dehydrogenase/fumarate reductase iron-sulfur protein family. In terms of assembly, component of complex II composed of four subunits: the flavoprotein (FP) sdha, iron-sulfur protein (IP) sdhb, and a cytochrome b composed of sdhc and sdhd. [2Fe-2S] cluster is required as a cofactor. [3Fe-4S] cluster serves as cofactor. The cofactor is [4Fe-4S] cluster.

The protein resides in the mitochondrion inner membrane. The enzyme catalyses a quinone + succinate = fumarate + a quinol. It catalyses the reaction (R)-malate + a quinone = enol-oxaloacetate + a quinol. It carries out the reaction (S)-malate + a quinone = enol-oxaloacetate + a quinol. The protein operates within carbohydrate metabolism; tricarboxylic acid cycle; fumarate from succinate (eukaryal route): step 1/1. Its activity is regulated as follows. Enol-oxaloacetate inhibits the succinate dehydrogenase activity. Functionally, iron-sulfur protein (IP) subunit of the succinate dehydrogenase complex (mitochondrial respiratory chain complex II), responsible for transferring electrons from succinate to ubiquinone (coenzyme Q). SDH also oxidizes malate to the non-canonical enol form of oxaloacetate, enol-oxaloacetate. Enol-oxaloacetate, which is a potent inhibitor of the succinate dehydrogenase activity, is further isomerized into keto-oxaloacetate. The chain is Succinate dehydrogenase [ubiquinone] iron-sulfur subunit, mitochondrial (sdhb) from Xenopus tropicalis (Western clawed frog).